The chain runs to 554 residues: MELCTQTVAADHEVIITRRSGSHHPTLWGDHFLAYADLRGANEGEEKQNEDLKEEVRKMLVMAPSKSLEKLELINTIQCLGLGYHFQSEIDESLSYMYTHYEEYSIGDLHAIALCFRLLRQQGYYVSCDAFKKFTNDQGNFKEELVKDVEGMLSLYEAAQFRVHGEQILDEALNFTIAQLKQILPKLSNSQLAQQITNALKYPIKDGIVRVETRKYISFYQQNQNHNEVLLNFAKLDFNILQTLHKKELSDMTRWWKKMELVNTLPYARDRLVECYFWCLGTYFEPQYSVARKMLTKISFYISIIDDTYDIYGKLDELTLFTQAIERWNIDASEQLPLYMKIIYRDLLDVYDEIEKELANENKSFLVNYSINEMKKVVRGYFQEAKWYYGKKVPTMEQYMKNGISTSAYILLTTTSWLAMGNVATKDAFDWVATEPPIVVASCYIIRLLNDLVSHEEEQKRGNAASAVECYMNEYSVTKEEAHIKIRDIIENYWKDLNEEYFKVDMIIIPRVLLMCIINLTRVAEFIYKDEDAYTFSKNNLKDVISDILVDPII.

Mg(2+) contacts are provided by aspartate 306, aspartate 310, and glutamate 458. Residues 306-310 (DDTYD) carry the DDXXD motif motif.

Belongs to the terpene synthase family. Tpsa subfamily. Mg(2+) serves as cofactor. Requires Mn(2+) as cofactor. As to expression, mostly expressed in stem and trichomes, to a lower extent in leaves, flowers and roots and, at low levels, in fruits.

The catalysed reaction is (2Z,6Z)-farnesyl diphosphate = beta-bisabolene + diphosphate. The enzyme catalyses (2E,6E)-farnesyl diphosphate = (+)-valencene + diphosphate. It catalyses the reaction (2E,6E)-farnesyl diphosphate = (E)-beta-farnesene + diphosphate. It carries out the reaction (2E,6E)-farnesyl diphosphate = gamma-gurjunene + diphosphate. The catalysed reaction is (2Z,6Z)-farnesyl diphosphate = (E)-gamma-bisabolene + diphosphate. The enzyme catalyses (2E)-geranyl diphosphate = limonene + diphosphate. It catalyses the reaction (2E)-geranyl diphosphate = beta-myrcene + diphosphate. It carries out the reaction (2E)-geranyl diphosphate = (E)-beta-ocimene + diphosphate. The catalysed reaction is (2E)-geranyl diphosphate = terpinolene + diphosphate. The enzyme catalyses (2E)-geranyl diphosphate = gamma-terpinene + diphosphate. It catalyses the reaction (2Z,6Z)-farnesyl diphosphate = (Z)-gamma-bisabolene + diphosphate. It carries out the reaction (2E,6E)-farnesyl diphosphate = (1S,5S,6R)-alpha-bergamotene + diphosphate. The catalysed reaction is (2Z,6Z)-farnesyl diphosphate = (1S,5S,6S)-alpha-bergamotene + diphosphate. It participates in secondary metabolite biosynthesis; terpenoid biosynthesis. Its function is as follows. Sesquiterpene synthase involved in the biosynthesis of volatile compounds. Mediates the conversion of (2E,6E)-farnesyl diphosphate (FPP) into gamma-gurjunene, (E)-beta-farnesene and (+)-valencene, and of (2Z,6Z)-farnesyl diphosphate ((ZZ)-FPP) into (E)-alpha-bergamotene and (Z)-gamma-bisabolene as well as beta-bisabolene, (Z)-alpha-bergamotene and (E)-gamma-bisabolene to a lower extent. Can act with a low efficiency as a monoterpene synthase with geranyl diphosphate (GPP) as substrate, thus producing beta-myrcene, (E)-beta-ocimene, limonene, terpinolene, gamma-terpinene and (Z)-beta-ocimene. This is Terpene synthase 17 from Solanum lycopersicum (Tomato).